Reading from the N-terminus, the 373-residue chain is S-adenosylmethionine:tRNA ribosyltransferase-isomerase (373 aa).

This sequence belongs to the QueA family. In terms of assembly, monomer.

It localises to the cytoplasm. It catalyses the reaction 7-aminomethyl-7-carbaguanosine(34) in tRNA + S-adenosyl-L-methionine = epoxyqueuosine(34) in tRNA + adenine + L-methionine + 2 H(+). It participates in tRNA modification; tRNA-queuosine biosynthesis. Transfers and isomerizes the ribose moiety from AdoMet to the 7-aminomethyl group of 7-deazaguanine (preQ1-tRNA) to give epoxyqueuosine (oQ-tRNA). The chain is S-adenosylmethionine:tRNA ribosyltransferase-isomerase from Rhizobium etli (strain CIAT 652).